The following is a 101-amino-acid chain: Urease subunit beta (101 aa).

This sequence belongs to the urease beta subunit family. In terms of assembly, heterotrimer of UreA (gamma), UreB (beta) and UreC (alpha) subunits. Three heterotrimers associate to form the active enzyme.

The protein localises to the cytoplasm. The enzyme catalyses urea + 2 H2O + H(+) = hydrogencarbonate + 2 NH4(+). The protein operates within nitrogen metabolism; urea degradation; CO(2) and NH(3) from urea (urease route): step 1/1. This Hahella chejuensis (strain KCTC 2396) protein is Urease subunit beta.